The chain runs to 275 residues: Formamidopyrimidine-DNA glycosylase (275 aa).

Proline 2 functions as the Schiff-base intermediate with DNA in the catalytic mechanism. Residue glutamate 3 is the Proton donor of the active site. The Proton donor; for beta-elimination activity role is filled by lysine 58. Residues histidine 91, arginine 109, and arginine 154 each coordinate DNA. Residues 240 to 274 (AVYERAGLPCRVCGTPIRRLVQGQRATYYCPSCQK) form an FPG-type zinc finger. Arginine 264 acts as the Proton donor; for delta-elimination activity in catalysis.

Belongs to the FPG family. As to quaternary structure, monomer. Requires Zn(2+) as cofactor.

It carries out the reaction Hydrolysis of DNA containing ring-opened 7-methylguanine residues, releasing 2,6-diamino-4-hydroxy-5-(N-methyl)formamidopyrimidine.. It catalyses the reaction 2'-deoxyribonucleotide-(2'-deoxyribose 5'-phosphate)-2'-deoxyribonucleotide-DNA = a 3'-end 2'-deoxyribonucleotide-(2,3-dehydro-2,3-deoxyribose 5'-phosphate)-DNA + a 5'-end 5'-phospho-2'-deoxyribonucleoside-DNA + H(+). In terms of biological role, involved in base excision repair of DNA damaged by oxidation or by mutagenic agents. Acts as a DNA glycosylase that recognizes and removes damaged bases. Has a preference for oxidized purines, such as 7,8-dihydro-8-oxoguanine (8-oxoG). Has AP (apurinic/apyrimidinic) lyase activity and introduces nicks in the DNA strand. Cleaves the DNA backbone by beta-delta elimination to generate a single-strand break at the site of the removed base with both 3'- and 5'-phosphates. In Bordetella petrii (strain ATCC BAA-461 / DSM 12804 / CCUG 43448), this protein is Formamidopyrimidine-DNA glycosylase.